Here is a 173-residue protein sequence, read N- to C-terminus: Lipid A deacylase PagL (173 aa).

A signal peptide spans 1–23 (MKKLLPLAVLAALSSVHVASAQA). Topologically, residues 25–28 (DVSA) are periplasmic. The beta stranded transmembrane segment at 29–32 (AVGA) threads the bilayer. Thr-33 is a topological domain (periplasmic). The chain crosses the membrane as a beta stranded span at residues 34-49 (GQSGMTYRLGLSWDWD). Topologically, residues 50 to 56 (KSWWQTS) are extracellular. Residues 57–71 (TGRLTGYWDAGYTYW) traverse the membrane as a beta stranded segment. The Periplasmic segment spans residues 72-73 (EG). The beta stranded transmembrane segment at 74–89 (GDEGAGKHSLSFAPVF) threads the bilayer. Residue Val-90 is a topological domain, extracellular. The beta stranded transmembrane segment at 91–93 (YEF) threads the bilayer. Topologically, residues 94 to 95 (AG) are periplasmic. The chain crosses the membrane as a beta stranded span at residues 96 to 98 (DSI). Over 99 to 100 (KP) the chain is Extracellular. The beta stranded transmembrane segment at 101-115 (FIEAGIGVAAFSGTR) threads the bilayer. Over 116 to 117 (VG) the chain is Periplasmic. A beta stranded transmembrane segment spans residues 118–128 (DQNLGSSLNFE). Over 129-138 (DRIGAGLKFA) the chain is Extracellular. Residues 139–148 (NGQSVGVRAI) form a beta stranded membrane-spanning segment. Catalysis depends on charge relay system residues His-149, Ser-151, and Glu-163. The Periplasmic segment spans residues 149–173 (HYSNAGLKQPNDGIESYSLFYKIPI).

The protein belongs to the PagL family. In terms of assembly, homodimer.

Its subcellular location is the cell outer membrane. It catalyses the reaction a 3-(acyloxy)acyl derivative of bacterial toxin + H2O = a 3-hydroxyacyl derivative of bacterial toxin + a fatty acid + H(+). Decreased activity at low temperatures (15 or 21 degrees Celsius). Functionally, has lipid A 3-O-deacylase activity. Hydrolyzes the ester bond at the 3 position of lipid A, a bioactive component of lipopolysaccharide (LPS), thereby releasing the primary fatty acyl moiety. Lacks fatty acyl chain-length specificity as removes both 3-OH C10 and 3-OH C14 fatty acids from lipid A. This is Lipid A deacylase PagL from Pseudomonas aeruginosa (strain ATCC 15692 / DSM 22644 / CIP 104116 / JCM 14847 / LMG 12228 / 1C / PRS 101 / PAO1).